Reading from the N-terminus, the 63-residue chain is Large ribosomal subunit protein bL28 (63 aa).

It belongs to the bacterial ribosomal protein bL28 family.

The polypeptide is Large ribosomal subunit protein bL28 (Desulfatibacillum aliphaticivorans).